The chain runs to 300 residues: N-acetylmannosamine kinase (300 aa).

ATP contacts are provided by residues 5 to 12 (ALDIGGTK) and 132 to 139 (GVGGGIVL). Residues H156, C166, C168, and C173 each contribute to the Zn(2+) site.

Belongs to the ROK (NagC/XylR) family. NanK subfamily. Homodimer.

It carries out the reaction an N-acyl-D-mannosamine + ATP = an N-acyl-D-mannosamine 6-phosphate + ADP + H(+). It functions in the pathway amino-sugar metabolism; N-acetylneuraminate degradation; D-fructose 6-phosphate from N-acetylneuraminate: step 2/5. Catalyzes the phosphorylation of N-acetylmannosamine (ManNAc) to ManNAc-6-P. The sequence is that of N-acetylmannosamine kinase (nanK) from Haemophilus influenzae (strain ATCC 51907 / DSM 11121 / KW20 / Rd).